The sequence spans 142 residues: UPF0179 protein PH1477 (142 aa).

The protein belongs to the UPF0179 family.

This chain is UPF0179 protein PH1477, found in Pyrococcus horikoshii (strain ATCC 700860 / DSM 12428 / JCM 9974 / NBRC 100139 / OT-3).